Here is a 215-residue protein sequence, read N- to C-terminus: LysM and putative peptidoglycan-binding domain-containing protein 2 (215 aa).

A disordered region spans residues 1–40 (MADSSPAPSLRAGGPREPRPSAPSPPPPHSRLGSEAEEAE). Alanine 2 carries the N-acetylalanine modification. Phosphoserine occurs at positions 5, 24, 34, and 58. The span at 20–29 (PSAPSPPPPH) shows a compositional bias: pro residues. In terms of domain architecture, LysM spans 72-116 (VEHRVRAGDTLQGIALKYGVSMEQIKRANKLFTNDCIFLKKTLNI). Residues 194 to 215 (AKKLKGESRDEEGLYTASLYHS) are disordered.

The protein is LysM and putative peptidoglycan-binding domain-containing protein 2 (LYSMD2) of Bos taurus (Bovine).